A 137-amino-acid chain; its full sequence is Large-conductance mechanosensitive channel (137 aa).

4 helical membrane-spanning segments follow: residues 9–29 (AFAV…GAAF), 32–52 (IVSS…IGGV), 54–74 (FGDL…VVLA), and 79–99 (IQSI…VKVI).

The protein belongs to the MscL family. As to quaternary structure, homopentamer.

Its subcellular location is the cell inner membrane. Its function is as follows. Channel that opens in response to stretch forces in the membrane lipid bilayer. May participate in the regulation of osmotic pressure changes within the cell. This chain is Large-conductance mechanosensitive channel, found in Pseudomonas fluorescens (strain ATCC BAA-477 / NRRL B-23932 / Pf-5).